A 75-amino-acid chain; its full sequence is MADAMDLAQLREQEDRERHISNARSRRHEVSAFICEECDAPIPEARRRAIPGVQCCVTCQEILELKSKHYNGGAL.

A disordered region spans residues 1–23; sequence MADAMDLAQLREQEDRERHISNA. The span at 9 to 20 shows a compositional bias: basic and acidic residues; it reads QLREQEDRERHI. A dksA C4-type zinc finger spans residues 35–59; sequence CEECDAPIPEARRRAIPGVQCCVTC.

This is an uncharacterized protein from Escherichia phage 186 (Bacteriophage 186).